Reading from the N-terminus, the 336-residue chain is 3-isopropylmalate dehydrogenase (336 aa).

Residues Arg-87, Arg-97, Arg-121, and Asp-211 each contribute to the substrate site. 3 residues coordinate Mg(2+): Asp-211, Asp-235, and Asp-239. Position 271 to 283 (271 to 283 (GSAPDIAGQGVAD)) interacts with NAD(+).

This sequence belongs to the isocitrate and isopropylmalate dehydrogenases family. LeuB type 2 subfamily. Homodimer. The cofactor is Mg(2+). Mn(2+) serves as cofactor.

The protein localises to the cytoplasm. The catalysed reaction is (2R,3S)-3-isopropylmalate + NAD(+) = 4-methyl-2-oxopentanoate + CO2 + NADH. It functions in the pathway amino-acid biosynthesis; L-leucine biosynthesis; L-leucine from 3-methyl-2-oxobutanoate: step 3/4. Functionally, catalyzes the oxidation of 3-carboxy-2-hydroxy-4-methylpentanoate (3-isopropylmalate) to 3-carboxy-4-methyl-2-oxopentanoate. The product decarboxylates to 4-methyl-2 oxopentanoate. In Mycobacterium avium (strain 104), this protein is 3-isopropylmalate dehydrogenase.